The primary structure comprises 168 residues: Ribosome maturation factor RimM (168 aa).

Residues Val-96–Trp-168 form the PRC barrel domain.

The protein belongs to the RimM family. In terms of assembly, binds ribosomal protein uS19.

The protein localises to the cytoplasm. An accessory protein needed during the final step in the assembly of 30S ribosomal subunit, possibly for assembly of the head region. Essential for efficient processing of 16S rRNA. May be needed both before and after RbfA during the maturation of 16S rRNA. It has affinity for free ribosomal 30S subunits but not for 70S ribosomes. This chain is Ribosome maturation factor RimM, found in Aromatoleum aromaticum (strain DSM 19018 / LMG 30748 / EbN1) (Azoarcus sp. (strain EbN1)).